A 63-amino-acid chain; its full sequence is MAKPIIPMPRSRFLRVKCIDCGNEQIVFSHPATKVRCLICGATLVEPTGGKGIVKAKILEVLE.

Zn(2+) contacts are provided by C18, C21, C37, and C40. A C4-type zinc finger spans residues 18–40 (CIDCGNEQIVFSHPATKVRCLIC).

It belongs to the eukaryotic ribosomal protein eS27 family. Part of the 30S ribosomal subunit. Requires Zn(2+) as cofactor.

The polypeptide is Small ribosomal subunit protein eS27 (Pyrococcus furiosus (strain ATCC 43587 / DSM 3638 / JCM 8422 / Vc1)).